The sequence spans 701 residues: Glycine--tRNA ligase beta subunit (701 aa).

This sequence belongs to the class-II aminoacyl-tRNA synthetase family. Tetramer of two alpha and two beta subunits.

Its subcellular location is the cytoplasm. It catalyses the reaction tRNA(Gly) + glycine + ATP = glycyl-tRNA(Gly) + AMP + diphosphate. This Thiobacillus denitrificans (strain ATCC 25259 / T1) protein is Glycine--tRNA ligase beta subunit.